The primary structure comprises 358 residues: Tetraacyldisaccharide 4'-kinase (358 aa).

Ile71–Thr78 contributes to the ATP binding site.

Belongs to the LpxK family.

The catalysed reaction is a lipid A disaccharide + ATP = a lipid IVA + ADP + H(+). It functions in the pathway glycolipid biosynthesis; lipid IV(A) biosynthesis; lipid IV(A) from (3R)-3-hydroxytetradecanoyl-[acyl-carrier-protein] and UDP-N-acetyl-alpha-D-glucosamine: step 6/6. Functionally, transfers the gamma-phosphate of ATP to the 4'-position of a tetraacyldisaccharide 1-phosphate intermediate (termed DS-1-P) to form tetraacyldisaccharide 1,4'-bis-phosphate (lipid IVA). This Methylibium petroleiphilum (strain ATCC BAA-1232 / LMG 22953 / PM1) protein is Tetraacyldisaccharide 4'-kinase.